Consider the following 72-residue polypeptide: Translation initiation factor IF-1 (72 aa).

The region spanning 1–72 is the S1-like domain; the sequence is MSKEEAIEVE…SRGRITYRAK (72 aa).

This sequence belongs to the IF-1 family. Component of the 30S ribosomal translation pre-initiation complex which assembles on the 30S ribosome in the order IF-2 and IF-3, IF-1 and N-formylmethionyl-tRNA(fMet); mRNA recruitment can occur at any time during PIC assembly.

It localises to the cytoplasm. Its function is as follows. One of the essential components for the initiation of protein synthesis. Stabilizes the binding of IF-2 and IF-3 on the 30S subunit to which N-formylmethionyl-tRNA(fMet) subsequently binds. Helps modulate mRNA selection, yielding the 30S pre-initiation complex (PIC). Upon addition of the 50S ribosomal subunit IF-1, IF-2 and IF-3 are released leaving the mature 70S translation initiation complex. This Geobacter metallireducens (strain ATCC 53774 / DSM 7210 / GS-15) protein is Translation initiation factor IF-1.